The chain runs to 24 residues: Brevinin-1BYa (24 aa).

Cysteines 18 and 24 form a disulfide.

Expressed by the skin glands.

Its subcellular location is the secreted. Antibacterial activity against Gram-positive bacterium S.aureus and Gram-negative bacterium E.coli. High antifungal activity against C.albicans and a strong hemolytic activity. The polypeptide is Brevinin-1BYa (Rana boylii (Foothill yellow-legged frog)).